We begin with the raw amino-acid sequence, 920 residues long: MLIHLPRLLHRSFGARRSFLASLYHTQRGVYGFRPRDGPERRAELTQISALNRDHGLARLVEAYRAHGHKVAKINPLLPQSPVLESVPEISLLNGAVRGVLNTTGLRHFGKAEATAEEVVAYLESTYCGGISVETSQLQTLEEREWFADRFEELKKEAFSPEERRMLAKLMLESQEFDHFLATKFATVKRYGGEGAESMMGFFYELFRSSVYSGVTDVVMGMPHRGRLNLLTGLLQFPPELMFRKMRGLSEFPEHSPSIGDVLSHLTSTVELDFGAGHPLHVTMLPNPSHLEAINPVTQGKTRGRQQVKQDGDYSTDPHSRPGDKVICLQVHGDASFSGQGIVPETFTLSNLPHYRVGGSIHLIVNNQVGYTTPSERGRSSLYCSDVGKMVGCAIIHVNGDDAEEVLRATRLAVEYQRRFRKDVIVDLLCYRQWGHNELDEPFFTNPAMYKIIRSRKSIPDSYADQLISEGLMTDEERSQIKTSYYATLNNQLTNMTLYSPPPTNLQGRWGDLVEPQNRVSCWDTGVAQPLLQFVGAKSVDIPEEIILHSHLRKTHVQARLQKLEEGTKLDWSTAEALAFGTLLCQGFNIRISGQDVGRGTFSQRHAMVVCQETNDMFIPLNHISSEQKGHLEVCNSALSEEAVLGFEYGMSIAQPRLLPIWEAQFGDFFNGAQIIFDTFLSGGEAKWLLQSGLVILLPHGYDGAGPEHSSCRIERFLQLCDSKEEGVDGDTVNMAVVNPTLPAQYFHLLRRQMIRNFRKPLIVASPKTLLRFSGAVSGLSDMGPGTSFKPIIGDSSVNPASVQRVLFCSGKHYYALLKHRETIPEAEKNTALVRVEELCPFPTEALQQELNKYTNAKEFIWSQEEPQNMGCWSFVSPRFEKQLACKLRLVSRPALPAPAVGIGTLHHQQHEAILTSSFS.

Positions 299-322 (QGKTRGRQQVKQDGDYSTDPHSRP) are disordered. A compositionally biased stretch (basic and acidic residues) spans 308–322 (VKQDGDYSTDPHSRP).

It belongs to the alpha-ketoglutarate dehydrogenase family. In terms of assembly, the 2-oxoadipate dehydrogenase complex is composed of OADH (2-oxoadipate dehydrogenase; E1a), DLST (dihydrolipoamide succinyltransferase; E2) and DLD (dihydrolipoamide dehydrogenase; E3). E1a functional unit is a dimer. It depends on thiamine diphosphate as a cofactor.

The protein localises to the mitochondrion. It catalyses the reaction N(6)-[(R)-lipoyl]-L-lysyl-[protein] + 2-oxoadipate + H(+) = N(6)-[(R)-S(8)-glutaryldihydrolipoyl]-L-lysyl-[protein] + CO2. It functions in the pathway amino-acid degradation. In terms of biological role, 2-oxoadipate dehydrogenase (E1a) component of the 2-oxoadipate dehydrogenase complex (OADHC). Participates in the first step, rate limiting for the overall conversion of 2-oxoadipate (alpha-ketoadipate) to glutaryl-CoA and CO(2) catalyzed by the whole OADHC. Catalyzes the irreversible decarboxylation of 2-oxoadipate via the thiamine diphosphate (ThDP) cofactor and subsequent transfer of the decarboxylated acyl intermediate on an oxidized dihydrolipoyl group that is covalently amidated to the E2 enzyme (dihydrolipoyllysine-residue succinyltransferase or DLST). Can catalyze the decarboxylation of 2-oxoglutarate in vitro, but at a much lower rate than 2-oxoadipate. Responsible for the last step of L-lysine, L-hydroxylysine and L-tryptophan catabolism with the common product being 2-oxoadipate. The polypeptide is 2-oxoadipate dehydrogenase complex component E1 (dhtkd1) (Danio rerio (Zebrafish)).